A 145-amino-acid polypeptide reads, in one-letter code: Hemoglobin subunit beta-2 (145 aa).

The Globin domain maps to 2–145; it reads HLTAEDRKEI…GVSHALGHGY (144 aa). Heme b is bound by residues H63 and H92.

It belongs to the globin family. Minor hemoglobin is a tetramer of two alpha-2 chains and two beta-2 chains. Red blood cells.

In terms of biological role, involved in oxygen transport from the lung to the various peripheral tissues. This is Hemoglobin subunit beta-2 (HBB2) from Triturus cristatus (Great crested newt).